The sequence spans 446 residues: Endoplasmic reticulum membrane adapter protein XK (446 aa).

Residues 1-2 are Cytoplasmic-facing; sequence MK. A helical transmembrane segment spans residues 3-23; it reads FPASVIASVFLFVAETAAALY. Topologically, residues 24-37 are extracellular; it reads LSSTYRSAGDRMWQ. A helical membrane pass occupies residues 38-58; that stretch reads VLTLLFSLMPCALVQFTLLFV. Residues 59 to 68 are Cytoplasmic-facing; sequence HRDLSRDRPL. Residues 69–89 traverse the membrane as a helical segment; it reads ALLMHLLQLGPLYRCCEVFCI. Over 90–140 the chain is Extracellular; the sequence is YCQSDQNEEPYVSITKKRQMPKDGLSEEVEKEVGQAEGKLITHRSAFSRAS. A Phosphoserine modification is found at Ser115. The chain crosses the membrane as a helical span at residues 141-161; sequence VIQAFLGSAPQLTLQLYITVL. The Cytoplasmic portion of the chain corresponds to 162–171; it reads EQNITTGRCF. Residues 172 to 192 form a helical membrane-spanning segment; that stretch reads IMTLSLLSIVYGALRCNILAI. Residues 193–208 are Extracellular-facing; that stretch reads KIKYDEYEVKVKPLAY. A helical transmembrane segment spans residues 209-229; that stretch reads VCIFLWRSFEIATRVIVLVLF. At 230–235 the chain is on the cytoplasmic side; it reads TSVLKI. A helical membrane pass occupies residues 236-256; that stretch reads WVVAVILVNFFSFFLYPWIVF. Residues 257–277 lie on the Extracellular side of the membrane; the sequence is WCSGSPFPENIEKALSRVGTT. A helical transmembrane segment spans residues 278 to 298; sequence IVLCFLTLLYAGINMFCWSAV. At 299 to 317 the chain is on the cytoplasmic side; sequence QLKIDNPELISKSQNWYRL. Residues 318–338 form a helical membrane-spanning segment; sequence LIYYMTRFIENSVLLLLWYFF. Residues 339 to 349 lie on the Extracellular side of the membrane; that stretch reads KTDIYMYVCAP. A helical membrane pass occupies residues 350–370; the sequence is LLILQLLIGYCTGILFMLVFY. Topologically, residues 371–446 are cytoplasmic; the sequence is QFFHPCKKLF…IWTAVDLCSA (76 aa).

This sequence belongs to the XK family. In terms of assembly, heterodimer with Kell; disulfide-linked. Interacts with VPS13A.

The protein localises to the endoplasmic reticulum membrane. Functionally, recruits the lipid transfer protein VPS13A from lipid droplets to the endoplasmic reticulum (ER) membrane. The sequence is that of Endoplasmic reticulum membrane adapter protein XK from Mus musculus (Mouse).